The following is a 119-amino-acid chain: Nascent polypeptide-associated complex protein (119 aa).

The 69-residue stretch at 5 to 73 folds into the NAC-A/B domain; the sequence is RMNSREMRRL…MREVPKEPEE (69 aa).

It belongs to the NAC-alpha family. As to quaternary structure, homodimer. Interacts with the ribosome. Binds ribosomal RNA.

Its function is as follows. Contacts the emerging nascent chain on the ribosome. The protein is Nascent polypeptide-associated complex protein of Thermoplasma acidophilum (strain ATCC 25905 / DSM 1728 / JCM 9062 / NBRC 15155 / AMRC-C165).